A 156-amino-acid polypeptide reads, in one-letter code: Nucleoredoxin-like protein 2 (156 aa).

The Thioredoxin domain occupies 9-147 (HLVTCKGATV…LACFQDWVEA (139 aa)).

Belongs to the nucleoredoxin family.

Its function is as follows. May be involved in the maintenance of both the function and the viability of sensory neurons, including photoreceptors and olfactory neurons. This is Nucleoredoxin-like protein 2 (NXNL2) from Homo sapiens (Human).